Consider the following 928-residue polypeptide: Mitogen-activated protein kinase kinase kinase dlk-1 (928 aa).

The segment at 1-72 (MTSTTMVTTL…GQKEGSPDPK (72 aa)) is disordered. Residues 42–52 (LVTQSAPNTPI) are compositionally biased toward polar residues. Residues 53 to 69 (QHREQANAEFGQKEGSP) are compositionally biased toward basic and acidic residues. In terms of domain architecture, Protein kinase spans 135 to 377 (ISELEWLGSG…FSHIRQHWEI (243 aa)). ATP-binding positions include 141–149 (LGSGSQGAV) and lysine 162. Aspartate 246 acts as the Proton acceptor in catalysis. The leucine-zipper stretch occupies residues 459–480 (LQGCFTELKLKESELAEWEKDL). Disordered stretches follow at residues 483 to 575 (REQW…DAIR), 644 to 696 (RRVS…PSRN), and 802 to 845 (ENAN…SMES). Over residues 509–519 (GYDDMSSDEDV) the composition is skewed to acidic residues. Residues 530–557 (SNTSSSSGVQSSPFSRQSSSRSSAGQQT) are compositionally biased toward low complexity. An important for interaction between isoform a and isoform c region spans residues 605-814 (SAGAGSCTAI…NDVDLTSSMD (210 aa)). The segment covering 647 to 656 (STSVNKSTAV) has biased composition (polar residues). Residues 677–695 (SCSSPRSSSKLNRSSYPSR) show a composition bias toward low complexity. The segment covering 823 to 833 (ADVESSEEDEG) has biased composition (acidic residues). Phosphoserine occurs at positions 874 and 878. The short motif at 874–879 (SDGLSD) is the SDGLSD hexapeptide element.

Belongs to the protein kinase superfamily. STE Ser/Thr protein kinase family. MAP kinase kinase kinase subfamily. Homooligomer (via leucine zipper domain and hexapeptide motif). Isoform a (via leucine zipper domain) forms a heterooligomer with isoform c (via leucine zipper domain). Isoform c does not self-associate. It depends on Mg(2+) as a cofactor. Post-translationally, ubiquitinated by rpm-1. Negatively regulated by ubiquitination by fsn-1 bound rpm-1, followed by degradation. In terms of processing, phosphorylation at Ser-874 and/or at Ser-878 abolishes interaction with isoform c and promotes binding to isoform a kinase domain (likely in trans) resulting in isoform a self-association and activation. In terms of tissue distribution, expressed in nerve ring, nerve cord, neurons, and pharynx.

The protein localises to the synapse. It is found in the cytoplasm. It localises to the cell projection. Its subcellular location is the axon. The protein resides in the dendrite. The protein localises to the cilium. It carries out the reaction L-seryl-[protein] + ATP = O-phospho-L-seryl-[protein] + ADP + H(+). The catalysed reaction is L-threonyl-[protein] + ATP = O-phospho-L-threonyl-[protein] + ADP + H(+). With respect to regulation, inactive when associated with isoform c. Dissociation from isoform c, which is dependent on the phosphorylation of the C-terminal hexapeptide, results in self-association and activation. Transient increase in Ca(2+) levels caused by axonal injury or synaptic activity triggers the dissociation of isoform a from isoform c; the dissociation may be influenced by the phosphorylation status of the C-terminal hexapeptide. Component of a MAP kinase pathway that functions presynaptically to regulate synaptic architecture and presynaptic differentiation. Phosphorylates and activates mkk-4. Has a role in axonal regrowth following injury and synaptogenesis. Plays a role in modulating polymerization of neuronal microtubules. Also promotes tubulin post-translational modifications that protect microtubules. Plays a role in cilium length regulation, possibly by reducing rab-5 mediated endocytosis, and may also have a role in intraflagellar transport in cilia. Plays a role in the formation of muscle connections, also called muscle arm extensions, between the body wall and the motor axons in the dorsal and ventral cord. Its function is as follows. Has a role in synapse and axon development, and in axonal regrowth following injury. In terms of biological role, by forming heterooligomers with isoform a, acts as an inhibitor of isoform a activation. Its inhibitory function is independent of its catalytic activity. The polypeptide is Mitogen-activated protein kinase kinase kinase dlk-1 (dlk-1) (Caenorhabditis elegans).